Consider the following 215-residue polypeptide: MHRDAWLPRPAFSLTGLSLFFSLVPPGRSMEVTVPATLNVLNGSDARLPCTFNSCYTVNHKQFSLNWTYQECNNCSEEMFLQFRMKIINLKLERFQDRVEFSGNPSKYDVSVMLRNVQPEDEGIYNCYIMNPPDRHRGHGKIHLQVLXEEPPERDSTVAVIVGASVGGFLAVVILVLMVVKCVRRKKEQKLSTDDLKTEEEGKTDGEGNPDDGAK.

Positions 1 to 29 are cleaved as a signal peptide; the sequence is MHRDAWLPRPAFSLTGLSLFFSLVPPGRS. Over 30-157 the chain is Extracellular; sequence MEVTVPATLN…XEEPPERDST (128 aa). Positions 32–154 constitute an Ig-like C2-type domain; sequence VTVPATLNVL…QVLXEEPPER (123 aa). N-linked (GlcNAc...) asparagine glycans are attached at residues Asn42, Asn66, and Asn74. Intrachain disulfides connect Cys50/Cys127 and Cys72/Cys75. Residues 158–179 form a helical membrane-spanning segment; it reads VAVIVGASVGGFLAVVILVLMV. Over 180–215 the chain is Cytoplasmic; sequence VKCVRRKKEQKLSTDDLKTEEEGKTDGEGNPDDGAK. The tract at residues 187 to 215 is disordered; the sequence is KEQKLSTDDLKTEEEGKTDGEGNPDDGAK. Residues 189–215 are compositionally biased toward basic and acidic residues; it reads QKLSTDDLKTEEEGKTDGEGNPDDGAK. The residue at position 192 (Ser192) is a Phosphoserine. Position 204 is a phosphothreonine (Thr204).

It belongs to the sodium channel auxiliary subunit SCN2B (TC 8.A.17) family. As to quaternary structure, a voltage-gated sodium (Nav) channel consists of an ion-conducting pore-forming alpha subunit functional on its own that is regulated by one or more beta subunits. The beta subunit SCN2B is disulfide-linked to the pore-forming alpha subunit. Interacts with SCN1A; regulatory subunit of SCN1A/Nav1.1. Interacts with SCN2A; regulatory subunit of SCN2A/Nav1.2. Interacts with SCN3A; regulatory subunit of SCN3A/Nav1.3. Interacts with SCN5A; regulatory subunit of SCN5A/Nav1.5. Interacts with SCN8A; regulatory subunit of SCN8A/Nav1.6. Interacts with SCN9A; regulatory subunit of SCN9A/Nav1.7. Interacts with SCN10A; regulatory subunit of SCN10A/Nav1.8. Interacts with TNR; may play a crucial role in clustering and regulation of activity of SCN2B-containing Nav channels at nodes of Ranvier.

It localises to the cell membrane. It is found in the cell projection. Its subcellular location is the axon. Regulatory subunit of multiple voltage-gated sodium (Nav) channels, that directly mediate the depolarization of excitable membranes. Navs, also called VGSCs (voltage-gated sodium channels) or VDSCs (voltage-dependent sodium channels), operate by switching between closed and open conformations depending on the voltage difference across the membrane. In the open conformation they allow Na(+) ions to selectively pass through the pore, along their electrochemical gradient. The influx of Na+ ions provokes membrane depolarization, initiating the propagation of electrical signals throughout cells and tissues. The accessory beta subunits participate in localization and functional modulation of the Nav channels. Modulates the activity of SCN1A/Nav1.1, SCN2A/Nav1.2, SCN2A/Nav1.3, SCN5A/Nav1.5, SCN8A/Nav1.6, SCN9A/Nav1.7 and SCN10A/Nav1.8. This Canis lupus familiaris (Dog) protein is Sodium channel regulatory subunit beta-2.